A 375-amino-acid chain; its full sequence is Trichodiene synthase (375 aa).

Belongs to the trichodiene synthase family.

It carries out the reaction (2E,6E)-farnesyl diphosphate = trichodiene + diphosphate. It participates in sesquiterpene biosynthesis; trichothecene biosynthesis. TS is a member of the terpene cyclase group of enzymes. It catalyzes the isomerization and cyclization of farnesyl pyro-phosphate to form trichodiene, the first cyclic intermediate in the biosynthetic pathway for trichothecenes. It serves to branch trichothecene biosynthesis from the isoprenoid pathway. The polypeptide is Trichodiene synthase (TRI5) (Fusarium acaciae-mearnsii).